Reading from the N-terminus, the 491-residue chain is Glycogen synthase (491 aa).

Residue Lys-15 participates in ADP-alpha-D-glucose binding.

It belongs to the glycosyltransferase 1 family. Bacterial/plant glycogen synthase subfamily.

It carries out the reaction [(1-&gt;4)-alpha-D-glucosyl](n) + ADP-alpha-D-glucose = [(1-&gt;4)-alpha-D-glucosyl](n+1) + ADP + H(+). It functions in the pathway glycan biosynthesis; glycogen biosynthesis. In terms of biological role, synthesizes alpha-1,4-glucan chains using ADP-glucose. This Hydrogenovibrio crunogenus (strain DSM 25203 / XCL-2) (Thiomicrospira crunogena) protein is Glycogen synthase.